The primary structure comprises 55 residues: uncharacterized protein (55 aa).

Positions M1–F25 are cleaved as a signal peptide.

This is an uncharacterized protein from Bacillus subtilis (strain 168).